A 545-amino-acid chain; its full sequence is Heparanase (545 aa).

Residues 1 to 37 (MLACRKPGLRPPLLLLLPLLGPLGPCSPGTPAAAAPA) form the signal peptide. A heparan sulfate group-binding site is contributed by 64–66 (DAN). Residues 112-159 (PAFEERSYWLSQSNQDICKSGSIPSDVEEKLRLEWPFQEQVLLREQYQ) constitute a propeptide, linker peptide. Residues Cys-129 and Cys-181 are joined by a disulfide bond. Residue 160 to 164 (KKFTN) coordinates heparan sulfate group. 2 N-linked (GlcNAc...) asparagine glycosylation sites follow: Asn-164 and Asn-219. Glu-227 acts as the Proton donor in catalysis. Heparan sulfate group is bound by residues 272–282 (QPRRNTVKMLK), His-298, and Arg-305. Residues 290–419 (EVIDSVTWHH…LLFKKLVGNK (130 aa)) form a required for heterodimerization with the heparanase 8 kDa subunit region. Residue Glu-345 is the Nucleophile of the active site. Heparan sulfate group is bound by residues 350-352 (FGG) and 391-393 (GNY). Cys-439 and Cys-544 form a disulfide bridge. Residue Asn-461 is glycosylated (N-linked (GlcNAc...) asparagine). The tract at residues 529–545 (FSYGFFVIRNAKVAACI) is required for transferring proheparanase to the Golgi apparatus, secretion and subsequent enzyme activity and for enhancement of PKB/AKT1 phosphorylation.

This sequence belongs to the glycosyl hydrolase 79 family. In terms of assembly, heterodimer; heterodimer formation between the 8 kDa and the 50 kDa subunits is required for enzyme activity. Interacts with TF; the interaction, inhibited by heparin, enhances the generation of activated factor X and activates coagulation. Interacts with HRG; the interaction is enhanced at acidic pH, partially inhibits binding of HPSE to cell surface receptors and modulates its enzymatic activity. Interacts with SDC1; the interaction enhances the shedding of SDC1. Interacts with HPSE2. Post-translationally, proteolytically processed. The cleavage of the 65 kDa form leads to the generation of a linker peptide, and the 8 kDa and the 50 kDa products. The active form, the 8/50 kDa heterodimer, is resistant to degradation. Complete removal of the linker peptide appears to be a prerequisite to the complete activation of the enzyme. In terms of processing, N-glycosylated. Glycosylation of the 50 kDa subunit appears to be essential for its solubility. In terms of tissue distribution, highly expressed in placenta and weakly in the kidney, lung, spleen and uterus.

The protein localises to the lysosome membrane. It is found in the secreted. The protein resides in the nucleus. It catalyses the reaction endohydrolysis of (1-&gt;4)-beta-D-glycosidic bonds of heparan sulfate chains in heparan sulfate proteoglycan.. Inhibited by laminarin sulfate and, to a lower extent, by heparin, sulfamin and EDTA. Activated by calcium and magnesium. In terms of biological role, endoglycosidase that cleaves heparan sulfate proteoglycans (HSPGs) into heparan sulfate side chains and core proteoglycans. Participates in extracellular matrix (ECM) degradation and remodeling. Selectively cleaves the linkage between a glucuronic acid unit and an N-sulfo glucosamine unit carrying either a 3-O-sulfo or a 6-O-sulfo group. Can also cleave the linkage between a glucuronic acid unit and an N-sulfo glucosamine unit carrying a 2-O-sulfo group, but not linkages between a glucuronic acid unit and a 2-O-sulfated iduronic acid moiety. Essentially inactive at neutral pH but becomes active under acidic conditions such as during tumor invasion and in inflammatory processes. Facilitates cell migration associated with metastasis, wound healing and inflammation. Enhances shedding of syndecans. Acts as a procoagulant by enhancing the generation of activated factor X/F10 in the presence of tissue factor/TF and activated factor VII/F7. Independent of its enzymatic activity, increases cell adhesion to the extracellular matrix (ECM). Enhances AKT1/PKB phosphorylation, possibly via interaction with a lipid raft-resident receptor. Plays a role in the regulation of osteogenesis. Enhances angiogenesis through up-regulation of SRC-mediated activation of VEGF. Implicated in hair follicle inner root sheath differentiation and hair homeostasis. This chain is Heparanase (HPSE), found in Bos taurus (Bovine).